The following is a 21-amino-acid chain: Cupiennin-6b (21 aa).

Ser-21 bears the Serine amide mark.

As to expression, expressed by the venom gland.

The protein localises to the secreted. This is Cupiennin-6b from Cupiennius salei (American wandering spider).